Here is a 128-residue protein sequence, read N- to C-terminus: Small ribosomal subunit protein uS13 (128 aa).

Positions 85 to 128 (GSYRGLRHRRSLPVRGQRTHTNARTRKGPRRGTVANKKKATGKT) are disordered. Basic residues predominate over residues 89–128 (GLRHRRSLPVRGQRTHTNARTRKGPRRGTVANKKKATGKT).

This sequence belongs to the universal ribosomal protein uS13 family. As to quaternary structure, part of the 30S ribosomal subunit. Forms a loose heterodimer with protein S19. Forms two bridges to the 50S subunit in the 70S ribosome.

In terms of biological role, located at the top of the head of the 30S subunit, it contacts several helices of the 16S rRNA. In the 70S ribosome it contacts the 23S rRNA (bridge B1a) and protein L5 of the 50S subunit (bridge B1b), connecting the 2 subunits; these bridges are implicated in subunit movement. Contacts the tRNAs in the A and P-sites. This is Small ribosomal subunit protein uS13 from Solibacter usitatus (strain Ellin6076).